Here is a 760-residue protein sequence, read N- to C-terminus: NAD(P)H-quinone oxidoreductase subunit 5, chloroplastic (760 aa).

16 helical membrane passes run tryptophan 9–phenylalanine 29, isoleucine 39–phenylalanine 59, isoleucine 89–valine 109, phenylalanine 125–isoleucine 145, isoleucine 147–threonine 167, glycine 185–phenylalanine 205, asparagine 221–alanine 241, threonine 260–alanine 280, leucine 282–isoleucine 302, leucine 329–isoleucine 349, alanine 356–serine 376, isoleucine 398–serine 418, tyrosine 429–phenylalanine 449, isoleucine 556–proline 576, phenylalanine 620–tyrosine 640, and phenylalanine 734–phenylalanine 754.

Belongs to the complex I subunit 5 family. NDH is composed of at least 16 different subunits, 5 of which are encoded in the nucleus.

The protein localises to the plastid. Its subcellular location is the chloroplast thylakoid membrane. The catalysed reaction is a plastoquinone + NADH + (n+1) H(+)(in) = a plastoquinol + NAD(+) + n H(+)(out). The enzyme catalyses a plastoquinone + NADPH + (n+1) H(+)(in) = a plastoquinol + NADP(+) + n H(+)(out). Functionally, NDH shuttles electrons from NAD(P)H:plastoquinone, via FMN and iron-sulfur (Fe-S) centers, to quinones in the photosynthetic chain and possibly in a chloroplast respiratory chain. The immediate electron acceptor for the enzyme in this species is believed to be plastoquinone. Couples the redox reaction to proton translocation, and thus conserves the redox energy in a proton gradient. The sequence is that of NAD(P)H-quinone oxidoreductase subunit 5, chloroplastic (ndhF) from Populus alba (White poplar).